The following is a 734-amino-acid chain: Putative protocadherin beta-18 (734 aa).

Cadherin domains lie at 1–79, 80–188, 189–293, 294–398, and 399–508; these read MWKT…TPTF, LNNH…APEF, EKPV…PPEI, AMTS…APIF, and TQTS…SPFV. The N-linked (GlcNAc...) asparagine glycan is linked to N115. N-linked (GlcNAc...) asparagine glycosylation is found at N365 and N383. N-linked (GlcNAc...) asparagine glycosylation occurs at N514. Residues 515–621 enclose the Cadherin 6 domain; sequence GSAPCTELVP…GFSQPYLPLT (107 aa). The chain crosses the membrane as a helical span at residues 638 to 658; it reads VVALASVSSLFLFSVFLFVAV.

Its subcellular location is the cell membrane. Potential calcium-dependent cell-adhesion protein. The protein is Putative protocadherin beta-18 (PCDHB18P) of Homo sapiens (Human).